The sequence spans 484 residues: Tubulin-like protein TubZ (484 aa).

32–33 (QK) lines the GTP pocket. Aspartate 64 provides a ligand contact to Mg(2+). GTP contacts are provided by residues 140–142 (GVG), asparagine 213, lysine 237, and asparagine 241. The tract at residues 408–484 (RKQDEEKVDI…LKTSNPFKKR (77 aa)) is required to bind TubR-DNA complex. Residues 428-484 (TFNPYNKNQGFGGASRFSGGKNSAFKRQTSEATSTQNQQEEENIISTLKTSNPFKKR) form a disordered region. Positions 452–484 (FKRQTSEATSTQNQQEEENIISTLKTSNPFKKR) are enriched in polar residues.

It belongs to the FtsZ family. TubZ subfamily. As to quaternary structure, forms filaments; a 2-stranded filament forms with the non-hydrolyzable GTP-gamma-S which is probably a precursor to the 4-stranded filament that forms in the presence of GTP. The 4-stranded form binds GDP. In vivo polymerizes to form dynamic filaments that often extend from one cell pole to the other, moving in a unidirectional manner. Filaments polymerize at the plus end and depolymerize at the minus end, a process called treadmilling. Polymerization only occurs above a critical concentration, it does not require upstream tubR. The tubC DNA-TubR complex binds to TubZ. Mg(2+) is required as a cofactor.

The protein resides in the cytoplasm. It catalyses the reaction GTP + H2O = GDP + phosphate + H(+). Its activity is regulated as follows. GTPase is inhibited by GTP-gamma-S, which also stabilizes filaments. In terms of biological role, a tubulin-like, filament forming GTPase; the motor component of the type III plasmid partition system which ensures correct segregation of the pBtoxis plasmid. Filaments may seed from the centromere-like site (tubC) when bound by DNA-binding protein TubR; the tubC-TubR complex stabilizes the TubZ filament. Filaments grow at the plus end and depolymerize at the minus end, a process called treadmilling. TubR-tubC complexes track the depolymerizing minus end of the filament, probably pulling plasmid within the cell. Required for pBtoxis plasmid replication/partition. Binds the TubR-tubC complex; GTP is not required for binding to TubR-tubC. TubZ alone does not bind DNA. Has a high GTPase activity in the presence of Mg(2+); in the presence of GTP assembles into dynamic filaments which upon polymerization bind almost exclusively GDP. Filament formation is cooperative, requiring a critical concentration. Formation occurs very quickly and is followed by disassembly as GTP is consumed. The polypeptide is Tubulin-like protein TubZ (Bacillus thuringiensis subsp. israelensis).